Reading from the N-terminus, the 508-residue chain is UBX domain-containing protein 4 (508 aa).

The segment at 1–200 (MLWFQGAIPA…PAEDLNIRVE (200 aa)) is interaction with UBQLN1. Topologically, residues 1 to 413 (MLWFQGAIPA…VHSSSGDIWT (413 aa)) are cytoplasmic. Composition is skewed to polar residues over residues 117-151 (SETSVANGSQSESSVSTPSASFEPNNTCENSQSRN) and 160-187 (TSDTKSDTATGGESAGHATSSQEPSGCS). The tract at residues 117-196 (SETSVANGSQ…SDQRPAEDLN (80 aa)) is disordered. Residues 315 to 393 (ERSTVARIQF…ELAPSASVVL (79 aa)) enclose the UBX domain. The stretch at 414–434 (LLGTVLYPFLAIWRLISNFLF) is an intramembrane region. Over 435 to 508 (SNPPPTQTSV…TWNGNSTQQM (74 aa)) the chain is Cytoplasmic. The tract at residues 440–508 (TQTSVRVTSS…TWNGNSTQQM (69 aa)) is disordered. The segment covering 441–458 (QTSVRVTSSEPPNPASSS) has biased composition (polar residues). The span at 459-491 (KSEKREPVRKRVLEKRGDDFKKEGKIYRLRTQD) shows a compositional bias: basic and acidic residues. Phosphothreonine is present on T489. Residues 498–508 (NTWNGNSTQQM) show a composition bias toward polar residues.

Directly interacts with VCP. Interacts with UBQLN1. Forms a complex with VCP and UBQLN1. Expressed in many tissues, including heart, brain, placenta, lung, liver, skeletal muscle, kidney and pancreas. Accumulates in Alzheimer disease-afflicted brains (at protein level).

The protein resides in the endoplasmic reticulum membrane. Its subcellular location is the nucleus envelope. Its function is as follows. Involved in endoplasmic reticulum-associated protein degradation (ERAD). Acts as a platform to recruit both UBQLN1 and VCP to the ER during ERAD. This chain is UBX domain-containing protein 4 (UBXN4), found in Homo sapiens (Human).